Consider the following 394-residue polypeptide: Xylose isomerase (394 aa).

Residues H54 and D57 contribute to the active site. 7 residues coordinate Mg(2+): E181, E217, H220, D245, D255, D257, and D292.

Belongs to the xylose isomerase family. In terms of assembly, homotetramer. Requires Mg(2+) as cofactor.

It is found in the cytoplasm. It catalyses the reaction alpha-D-xylose = alpha-D-xylulofuranose. In Actinoplanes missouriensis (strain ATCC 14538 / DSM 43046 / CBS 188.64 / JCM 3121 / NBRC 102363 / NCIMB 12654 / NRRL B-3342 / UNCC 431), this protein is Xylose isomerase (xylA).